The following is a 431-amino-acid chain: CCA-adding enzyme (431 aa).

2 residues coordinate ATP: serine 50 and lysine 53. Serine 50 and lysine 53 together coordinate CTP. 3 residues coordinate Mg(2+): aspartate 61, aspartate 63, and aspartate 112. Positions 135, 155, and 164 each coordinate ATP. Histidine 135, lysine 155, and tyrosine 164 together coordinate CTP.

This sequence belongs to the tRNA nucleotidyltransferase/poly(A) polymerase family. Archaeal CCA-adding enzyme subfamily. In terms of assembly, homodimer. The cofactor is Mg(2+).

It carries out the reaction a tRNA precursor + 2 CTP + ATP = a tRNA with a 3' CCA end + 3 diphosphate. It catalyses the reaction a tRNA with a 3' CCA end + 2 CTP + ATP = a tRNA with a 3' CCACCA end + 3 diphosphate. Its function is as follows. Catalyzes the addition and repair of the essential 3'-terminal CCA sequence in tRNAs without using a nucleic acid template. Adds these three nucleotides in the order of C, C, and A to the tRNA nucleotide-73, using CTP and ATP as substrates and producing inorganic pyrophosphate. tRNA 3'-terminal CCA addition is required both for tRNA processing and repair. Also involved in tRNA surveillance by mediating tandem CCA addition to generate a CCACCA at the 3' terminus of unstable tRNAs. While stable tRNAs receive only 3'-terminal CCA, unstable tRNAs are marked with CCACCA and rapidly degraded. This is CCA-adding enzyme from Thermoplasma acidophilum (strain ATCC 25905 / DSM 1728 / JCM 9062 / NBRC 15155 / AMRC-C165).